The chain runs to 362 residues: N5-carboxyaminoimidazole ribonucleotide synthase (362 aa).

ATP is bound by residues Arg108, Lys148, 153-159 (GYDGKGQ), 185-188 (EGFV), Glu193, His216, and 270-271 (NE). The region spanning 112-300 (KQFLNESGIE…QFEQHIRAVA (189 aa)) is the ATP-grasp domain.

Belongs to the PurK/PurT family. Homodimer.

It catalyses the reaction 5-amino-1-(5-phospho-beta-D-ribosyl)imidazole + hydrogencarbonate + ATP = 5-carboxyamino-1-(5-phospho-D-ribosyl)imidazole + ADP + phosphate + 2 H(+). Its pathway is purine metabolism; IMP biosynthesis via de novo pathway; 5-amino-1-(5-phospho-D-ribosyl)imidazole-4-carboxylate from 5-amino-1-(5-phospho-D-ribosyl)imidazole (N5-CAIR route): step 1/2. Its function is as follows. Catalyzes the ATP-dependent conversion of 5-aminoimidazole ribonucleotide (AIR) and HCO(3)(-) to N5-carboxyaminoimidazole ribonucleotide (N5-CAIR). The protein is N5-carboxyaminoimidazole ribonucleotide synthase of Brucella melitensis biotype 1 (strain ATCC 23456 / CCUG 17765 / NCTC 10094 / 16M).